The chain runs to 183 residues: NADH-quinone oxidoreductase subunit I (183 aa).

2 consecutive 4Fe-4S ferredoxin-type domains span residues 44–74 (LNRW…VEAG) and 90–119 (RVYQ…MTNE). Residues cysteine 54, cysteine 57, cysteine 60, cysteine 64, cysteine 99, cysteine 102, cysteine 105, and cysteine 109 each contribute to the [4Fe-4S] cluster site. A disordered region spans residues 143 to 183 (QGMEAPPHPMRLGETEKDYYRLGRDDNAAARADEQNSEAVQ). Residues 153–176 (RLGETEKDYYRLGRDDNAAARADE) show a composition bias toward basic and acidic residues.

The protein belongs to the complex I 23 kDa subunit family. In terms of assembly, NDH-1 is composed of 14 different subunits. Subunits NuoA, H, J, K, L, M, N constitute the membrane sector of the complex. The cofactor is [4Fe-4S] cluster.

Its subcellular location is the cell membrane. It catalyses the reaction a quinone + NADH + 5 H(+)(in) = a quinol + NAD(+) + 4 H(+)(out). Its function is as follows. NDH-1 shuttles electrons from NADH, via FMN and iron-sulfur (Fe-S) centers, to quinones in the respiratory chain. The immediate electron acceptor for the enzyme in this species is believed to be ubiquinone. Couples the redox reaction to proton translocation (for every two electrons transferred, four hydrogen ions are translocated across the cytoplasmic membrane), and thus conserves the redox energy in a proton gradient. This Thermobifida fusca (strain YX) protein is NADH-quinone oxidoreductase subunit I.